Consider the following 398-residue polypeptide: Protochlorophyllide reductase, chloroplastic (398 aa).

Residues 1–64 (MALQAASLVS…NQQIGAIRAQ (64 aa)) constitute a chloroplast transit peptide.

Belongs to the short-chain dehydrogenases/reductases (SDR) family. POR subfamily.

It is found in the plastid. Its subcellular location is the chloroplast. It catalyses the reaction chlorophyllide a + NADP(+) = protochlorophyllide a + NADPH + H(+). It functions in the pathway porphyrin-containing compound metabolism; chlorophyll biosynthesis. Functionally, phototransformation of protochlorophyllide (Pchlide) to chlorophyllide (Chlide). The protein is Protochlorophyllide reductase, chloroplastic (PORA) of Cucumis sativus (Cucumber).